Consider the following 279-residue polypeptide: Monoacylglycerol lipase (279 aa).

Ser110 functions as the Nucleophile in the catalytic mechanism. Active-site charge relay system residues include Asp226 and His256.

Belongs to the AB hydrolase superfamily. As to quaternary structure, monomer.

The protein localises to the secreted. It is found in the cell wall. The catalysed reaction is a 1-acylglycerol + H2O = glycerol + a fatty acid + H(+). It carries out the reaction Hydrolyzes glycerol monoesters of long-chain fatty acids.. It catalyses the reaction 1-butyrylglycerol + H2O = butanoate + glycerol + H(+). The enzyme catalyses 1-octanoylglycerol + H2O = octanoate + glycerol + H(+). The catalysed reaction is 1-decanoylglycerol + H2O = decanoate + glycerol + H(+). It carries out the reaction 1-dodecanoylglycerol + H2O = dodecanoate + glycerol + H(+). It catalyses the reaction 1-tetradecanoylglycerol + H2O = tetradecanoate + glycerol + H(+). The enzyme catalyses 1-(9Z-octadecenoyl)-glycerol + H2O = glycerol + (9Z)-octadecenoate + H(+). The catalysed reaction is 2-(9Z-octadecenoyl)-glycerol + H2O = glycerol + (9Z)-octadecenoate + H(+). With respect to regulation, inhibited by the serine esterase inhibitors PMSF (100%), E600 (80%) and THL (22%). Virtual screening identified a tautomer of ZINC13451138, known inhibitor for HIV-1 integrase, as a potential inhibitor. In terms of biological role, involved in the hydrolysis of exogenous host lipids during chronic infection. Catalyzes the hydrolysis of both monoacylglycerols (MAG) and diacylglycerols (DAG), with a preference for MAG. It hydrolyzes 2-MAG, 1-3-MAG and MAG with short, medium and long chain fatty acids such as 1-monobutyroyl-rac-glycerol (MC4), 1-mono-octanoyl-rac-glycerol (MC8), 1-monodecanoyl-rac-glycerol (MC10), 1-monolauroyl-rac-glycerol (MC12), 1-monomyristoyl-rac-glycerol (MC14) and 1-mono-oleyl-rac-glycerol (MC18:1). Also able to hydrolyze DAG with short (DiC6) and medium (DiC10) fatty acid chains, but not with longest fatty acid chains. Can also hydrolyze vinyl laurate (VC12), vinyl butyrate (VC4) and vinyl propionate (VC3). Induces an inflammatory response and cell apoptosis in the host cells. Increases expression of IL-6, NF-kappaB, TLR-2, TLR-6, TNF-alpha, and MyD88 in mouse alveolar macrophage RAW264.7 cells. Persistent expression induces RAW264.7 cell apoptosis in vitro. In Mycobacterium tuberculosis (strain ATCC 25618 / H37Rv), this protein is Monoacylglycerol lipase.